The following is a 514-amino-acid chain: Acetylcholine receptor subunit gamma (514 aa).

An N-terminal signal peptide occupies residues 1–22 (MRCSDLLLLFLLALCVLPGISC). Topologically, residues 23-241 (RNQEEKLLQD…VIFYLIIQRK (219 aa)) are extracellular. Cys150 and Cys164 are disulfide-bonded. The N-linked (GlcNAc...) asparagine glycan is linked to Asn163. 3 helical membrane-spanning segments follow: residues 242–266 (PLFY…VYFL), 275–293 (CTVS…FLIA), and 309–330 (YLTF…VLNV). Topologically, residues 331-473 (SLRTPNTHSM…WILVGRVIDR (143 aa)) are cytoplasmic. At Tyr386 the chain carries Phosphotyrosine; by Tyr-kinases. A helical transmembrane segment spans residues 474 to 494 (VCFFIMASLFVCGTIGIFLMA).

It belongs to the ligand-gated ion channel (TC 1.A.9) family. Acetylcholine receptor (TC 1.A.9.1) subfamily. Gamma/CHRNG sub-subfamily. Pentamer of two alpha chains, and one each of the beta, delta, and gamma chains.

It localises to the postsynaptic cell membrane. The protein localises to the cell membrane. It catalyses the reaction K(+)(in) = K(+)(out). The catalysed reaction is Na(+)(in) = Na(+)(out). Its function is as follows. After binding acetylcholine, the AChR responds by an extensive change in conformation that affects all subunits and leads to opening of an ion-conducting channel across the plasma membrane. The chain is Acetylcholine receptor subunit gamma (CHRNG) from Gallus gallus (Chicken).